The chain runs to 1048 residues: 3-hydroxy-3-methylglutaryl-coenzyme A reductase (1048 aa).

At 1–32 (MDPVVKKPSPGGVQHRVTKGLRAIVGHACRHP) the chain is on the cytoplasmic side. Residues 33–53 (IHTLLVTALTAATTHLHVLEG) form a helical membrane-spanning segment. The Lumenal segment spans residues 54–220 (TYQAAHRGLA…FLHRVKHAET (167 aa)). Residues 221–241 (VDLVIIGLSYLAMNMTVVSLF) form a helical membrane-spanning segment. Positions 222-403 (DLVIIGLSYL…FTFYATILCV (182 aa)) constitute an SSD domain. Topologically, residues 242–250 (RVMRQLGSR) are cytoplasmic. A helical membrane pass occupies residues 251–271 (FWLATSVLLSGAFAFVLGLGI). At 272 to 276 (TTTCD) the chain is on the lumenal side. A helical transmembrane segment spans residues 277 to 297 (VPVDMLLLFEGIPYLVLTVGF). Topologically, residues 298 to 348 (EKPIQLTRAVLCVSEELRGGWQRPVPNGASSDDSRQSQLIPNIIQLAVDRE) are cytoplasmic. Residues 349–369 (GWYIVRSYLLEIGALALGAVL) traverse the membrane as a helical segment. Topologically, residues 370-377 (RPNDSLGH) are lumenal. N-linked (GlcNAc...) asparagine glycosylation is present at N372. A helical transmembrane segment spans residues 378–398 (FCFLAAWTLLIDAILLFTFYA). The Cytoplasmic segment spans residues 399–439 (TILCVKLEITRIRSPGGLGQVNAKHPSGIFGHKVKSTNITW). The helical transmembrane segment at 440–460 (WKLLTVGGFVLCHFLQLSPFF) threads the bilayer. Residues 461 to 542 (YRVMGEYMAN…LDGLESPLGR (82 aa)) lie on the Lumenal side of the membrane. N470 and N520 each carry an N-linked (GlcNAc...) asparagine glycan. The helical transmembrane segment at 543-563 (LCLMGALVVSLVLNNHLIHAA) threads the bilayer. Over 564–1048 (RWHAWPQARE…NRSAGATVKK (485 aa)) the chain is Cytoplasmic. The active-site Charge relay system is the E729. 735–741 (SASRGCK) provides a ligand contact to CoA. NADP(+)-binding positions include 796–798 (SRF) and 823–831 (DAMGMNMIS). K863 (charge relay system) is an active-site residue. Residue 892–894 (VLK) coordinates CoA. D939 (charge relay system) is an active-site residue. Residue 1034-1035 (AH) coordinates CoA. Residue H1035 is the Proton donor of the active site. Position 1039 to 1040 (1039 to 1040 (NR)) interacts with NADP(+).

This sequence belongs to the HMG-CoA reductase family.

The protein resides in the endoplasmic reticulum membrane. The enzyme catalyses (R)-mevalonate + 2 NADP(+) + CoA = (3S)-3-hydroxy-3-methylglutaryl-CoA + 2 NADPH + 2 H(+). It functions in the pathway metabolic intermediate biosynthesis; (R)-mevalonate biosynthesis; (R)-mevalonate from acetyl-CoA: step 3/3. Its function is as follows. HMG-CoA reductase; part of the first module of ergosterol biosynthesis pathway that includes the early steps of the pathway, conserved across all eukaryotes, and which results in the formation of mevalonate from acetyl-coenzyme A (acetyl-CoA). In this module, the cytosolic acetyl-CoA acetyltransferase catalyzes the formation of acetoacetyl-CoA. The hydroxymethylglutaryl-CoA synthase then condenses acetyl-CoA with acetoacetyl-CoA to form HMG-CoA. The rate-limiting step of the early module is the reduction to mevalonate by the 3-hydroxy-3-methylglutaryl-coenzyme A (HMG-CoA) reductase. The sequence is that of 3-hydroxy-3-methylglutaryl-coenzyme A reductase from Aspergillus terreus (strain NIH 2624 / FGSC A1156).